The sequence spans 149 residues: Calmodulin (149 aa).

N-acetylalanine is present on alanine 2. EF-hand domains are found at residues 8–43 (EQIAEFKEAFSLFDKDGDGCITTKELGTVMRSLGQN), 44–79 (PTEAELQDMINEVDADGNGTIDFPEFLNLMARKMKD), 81–116 (DSEEELKEAFRVFDKDQDGFISAAELRHVMTNLGEK), and 117–149 (LTDEEVDEMIREADVDGDGQINYEEFVKVMMAK). Ca(2+) contacts are provided by aspartate 21, aspartate 23, aspartate 25, cysteine 27, glutamate 32, aspartate 57, aspartate 59, asparagine 61, threonine 63, glutamate 68, aspartate 94, aspartate 96, aspartate 98, and glutamate 105. An N6,N6,N6-trimethyllysine modification is found at lysine 116. Aspartate 130, aspartate 132, aspartate 134, glutamine 136, and glutamate 141 together coordinate Ca(2+).

The protein belongs to the calmodulin family.

Functionally, calmodulin mediates the control of a large number of enzymes, ion channels and other proteins by Ca(2+). Among the enzymes to be stimulated by the calmodulin-Ca(2+) complex are a number of protein kinases and phosphatases. The protein is Calmodulin of Triticum aestivum (Wheat).